A 241-amino-acid polypeptide reads, in one-letter code: MORN repeat-containing protein 3 (241 aa).

The interaction with MDM2 stretch occupies residues 6–35; that stretch reads CPRKVEPPWKGWDRKAQKNGLRHQVFAVNG. MORN repeat units lie at residues 38 to 60, 62 to 84, 91 to 113, 114 to 136, 137 to 159, 160 to 182, and 184 to 205; these read YVGE…KSGA, YEGD…DPET, YSGW…PKEY, YEGE…NGDI, YEGQ…NGNR, YEGI…DHGQ, and FEGY…GRDE. Residues 76 to 100 are interaction with SIRT1; that stretch reads SLSHPDPETGKLRRVYSGWWKGDKK. Positions 206-240 are interaction with TP53; that stretch reads APEPTQFPIPKVEILDPDGVLKEALDKLMKPEEEE.

As to quaternary structure, interacts with MEIG1. Interacts with TP53, MDM2 and SIRT1; the interactions mediate post-transcriptional modifications of TP53 by MDM2 and SIRT1. In terms of tissue distribution, expressed in testis (at protein level).

The protein resides in the cytoplasmic vesicle. It localises to the secretory vesicle. The protein localises to the acrosome. Functionally, assembles a suppression complex (suppresome) by tethering SIRT1 and MDM2 to regulate composite modifications of p53/TP53. Confers both deacetylation-mediated functional inactivation, by SIRT1, and ubiquitination-dependent degradation, by MDM2, of p53/TP53, promoting a proliferative and cell survival behaviors. May play a role in the regulation of spermatogenesis. This chain is MORN repeat-containing protein 3 (Morn3), found in Mus musculus (Mouse).